The sequence spans 543 residues: uncharacterized protein (543 aa).

The TRAM domain occupies 1-59 (MLKKNDIVEVEIVDLTHEGAGVAKVDGLVFFVENALPSEKILMRVLKVNKKIGFGKVEK). Residues Gln-283, Tyr-312, Glu-333, and Asp-381 each coordinate S-adenosyl-L-methionine. Cys-408 serves as the catalytic Nucleophile.

Belongs to the class I-like SAM-binding methyltransferase superfamily. RNA M5U methyltransferase family.

This is an uncharacterized protein from Streptococcus pneumoniae (strain ATCC BAA-255 / R6).